We begin with the raw amino-acid sequence, 481 residues long: Membrane-bound lytic murein transglycosylase F (481 aa).

Positions 1-21 (MKPLKLNYFFIGIITLLLALA) are cleaved as a signal peptide. Residues 22 to 268 (LWPSIPWRSS…RLEEKYLGHV (247 aa)) are non-LT domain. An LT domain region spans residues 269 to 481 (GEFDYVDTTT…PAVPLTKVPE (213 aa)). The active site involves Glu-313.

In the N-terminal section; belongs to the bacterial solute-binding protein 3 family. The protein in the C-terminal section; belongs to the transglycosylase Slt family.

It localises to the cell outer membrane. The enzyme catalyses Exolytic cleavage of the (1-&gt;4)-beta-glycosidic linkage between N-acetylmuramic acid (MurNAc) and N-acetylglucosamine (GlcNAc) residues in peptidoglycan, from either the reducing or the non-reducing ends of the peptidoglycan chains, with concomitant formation of a 1,6-anhydrobond in the MurNAc residue.. In terms of biological role, murein-degrading enzyme that degrades murein glycan strands and insoluble, high-molecular weight murein sacculi, with the concomitant formation of a 1,6-anhydromuramoyl product. Lytic transglycosylases (LTs) play an integral role in the metabolism of the peptidoglycan (PG) sacculus. Their lytic action creates space within the PG sacculus to allow for its expansion as well as for the insertion of various structures such as secretion systems and flagella. The sequence is that of Membrane-bound lytic murein transglycosylase F from Pectobacterium atrosepticum (strain SCRI 1043 / ATCC BAA-672) (Erwinia carotovora subsp. atroseptica).